A 99-amino-acid chain; its full sequence is UPF0213 protein spr1390 (99 aa).

The GIY-YIG domain maps to 3 to 78 (HKAYMYVLEC…KRKKRPQKEE (76 aa)).

Belongs to the UPF0213 family.

The sequence is that of UPF0213 protein spr1390 from Streptococcus pneumoniae (strain ATCC BAA-255 / R6).